Reading from the N-terminus, the 290-residue chain is MEDHVLKKLNANGPAPHIPNLNLYGKKMNFSYMVMTLLGRNLQDLESTNFVVNKGFSRGTWSRVGIQWVYALKYVHYNGFIHRNVNTQNLFLGNEKDSERAKIIHILDFGLGRPFARYHARENKWIVRIARHSAEFRGSFRYASPNVHLRKEQGRVDDVWSLPYVIIELNGGKALPWQTDYRRGRVEQMKLNLTPKDVMSDMPACMDKLMPHLASLNYYQRPDDHMIFKCFWQVMENEKITPSSKFDWENEEPDMSVPPAAWENPDGRYFQSNPLEINGPPTPAEVDFVL.

In terms of domain architecture, Protein kinase spans 1–240 (MEDHVLKKLN…FWQVMENEKI (240 aa)). Disordered stretches follow at residues 244–263 (SKFDWENEEPDMSVPPAAWE) and 268–290 (RYFQSNPLEINGPPTPAEVDFVL).

This sequence belongs to the protein kinase superfamily. CK1 Ser/Thr protein kinase family.

In Caenorhabditis elegans, this protein is Inactive tau-tubulin kinase ttbk-6.